The primary structure comprises 429 residues: Protein AST1 (429 aa).

In terms of assembly, interacts with PMA1.

The protein resides in the cell membrane. It is found in the membrane raft. The protein localises to the golgi apparatus membrane. It localises to the late endosome membrane. In terms of biological role, lipid raft-associated protein involved in the targeting of PMA1 from Golgi to the plasma membrane. May induce clustering of PMA1, which facilitates partition of PMA1 into lipid rafts after leaving the ER and its transport to the cell surface. The chain is Protein AST1 from Saccharomyces cerevisiae (strain ATCC 204508 / S288c) (Baker's yeast).